A 334-amino-acid chain; its full sequence is D-alanine--D-alanine ligase (334 aa).

In terms of domain architecture, ATP-grasp spans 111 to 315; the sequence is KRVCLSHGVP…YEDLCIEILR (205 aa). ATP is bound at residue 141 to 196; sequence AAEFGLPLMLKAPHEGSTIGIAKVETAEGMQAGFDLCAKYEAVVLVEQFVKGRELT. Mg(2+) contacts are provided by Asp-268, Glu-282, and Asn-284.

This sequence belongs to the D-alanine--D-alanine ligase family. Mg(2+) is required as a cofactor. The cofactor is Mn(2+).

It is found in the cytoplasm. It catalyses the reaction 2 D-alanine + ATP = D-alanyl-D-alanine + ADP + phosphate + H(+). It functions in the pathway cell wall biogenesis; peptidoglycan biosynthesis. In terms of biological role, cell wall formation. The polypeptide is D-alanine--D-alanine ligase (Herminiimonas arsenicoxydans).